Reading from the N-terminus, the 148-residue chain is Large ribosomal subunit protein bL9 (148 aa).

It belongs to the bacterial ribosomal protein bL9 family.

Functionally, binds to the 23S rRNA. The sequence is that of Large ribosomal subunit protein bL9 from Clostridium beijerinckii (strain ATCC 51743 / NCIMB 8052) (Clostridium acetobutylicum).